Here is a 330-residue protein sequence, read N- to C-terminus: Inositol 2-dehydrogenase (330 aa).

Belongs to the Gfo/Idh/MocA family.

It catalyses the reaction myo-inositol + NAD(+) = scyllo-inosose + NADH + H(+). The protein operates within polyol metabolism; myo-inositol degradation into acetyl-CoA; acetyl-CoA from myo-inositol: step 1/7. Functionally, involved in the oxidation of myo-inositol (MI) to 2-keto-myo-inositol (2KMI or 2-inosose). The polypeptide is Inositol 2-dehydrogenase (idhA) (Rhizobium meliloti (strain 1021) (Ensifer meliloti)).